Consider the following 255-residue polypeptide: MLQISHLYADYGGKPVLEDINLTLESGELLVVLGPSGCGKTTLLNLIAGFVPYQHGSIQLAGKRIEGPGAERGVVFQNEGLLPWRNVQDNVAFGLQLAGIEKMQRLEIAHQMLKKVGLEGAEKRYIWQLSGGQRQRVGIARALAANPQLLLLDEPFGALDAFTRDQMQTLLLKLWQETGKQVLLITHDIEEAVFMATELVLLSPGPGRVLERLPLNFARRFVAGESSRSIKSDPQFIAMREYVLSRVFEQREAFS.

The ABC transporter domain maps to 2–229; that stretch reads LQISHLYADY…RFVAGESSRS (228 aa). 34–41 is an ATP binding site; the sequence is GPSGCGKT.

This sequence belongs to the ABC transporter superfamily. Taurine importer (TC 3.A.1.17.1) family. The complex is composed of two ATP-binding proteins (TauB), two transmembrane proteins (TauC) and a solute-binding protein (TauA).

It is found in the cell inner membrane. It carries out the reaction taurine(out) + ATP + H2O = taurine(in) + ADP + phosphate + H(+). Its function is as follows. Part of the ABC transporter complex TauABC involved in taurine import. Responsible for energy coupling to the transport system. In Escherichia coli O157:H7, this protein is Taurine import ATP-binding protein TauB.